A 339-amino-acid chain; its full sequence is HTH-type transcriptional regulator PtxS (339 aa).

Residues 12–67 (VTISEVARVAGVSKATVSRYIGGDRQLLAEATAKRLEEVIERLGYRPNQMARGLKR) enclose the HTH lacI-type domain. Residues 14 to 33 (ISEVARVAGVSKATVSRYIG) constitute a DNA-binding region (H-T-H motif).

As to quaternary structure, homodimer in solution.

With respect to regulation, 2-ketogluconate acts as a molecular effector and causes dissociation of PtxS from its target promoter. In terms of biological role, negatively regulates glucose metabolism by binding directly to the promoter region of the kgu and gad operons. It also negatively regulates its own synthesis. This is HTH-type transcriptional regulator PtxS from Pseudomonas putida (strain ATCC 47054 / DSM 6125 / CFBP 8728 / NCIMB 11950 / KT2440).